The chain runs to 126 residues: Nascent polypeptide-associated complex protein (126 aa).

The 68-residue stretch at 10 to 77 (PRMMKQMQKM…AKKVAKEEEK (68 aa)) folds into the NAC-A/B domain.

Belongs to the NAC-alpha family. Homodimer. Interacts with the ribosome. Binds ribosomal RNA.

Its function is as follows. Contacts the emerging nascent chain on the ribosome. The chain is Nascent polypeptide-associated complex protein from Methanococcus maripaludis (strain DSM 14266 / JCM 13030 / NBRC 101832 / S2 / LL).